A 574-amino-acid polypeptide reads, in one-letter code: Protein SIX6OS1 (574 aa).

A disordered region spans residues 259 to 313 (KDEQVSNRSSQNSQLLLPCESQKFVRNMNSSEARVTDKKEESSANQSKFVRSDVR). Over residues 264–275 (SNRSSQNSQLLL) the composition is skewed to low complexity. At Thr-427 the chain carries Phosphothreonine. A Phosphoserine modification is found at Ser-430. The interval 549–574 (QDPSTMTSSSSKDFSSSQNKTQFMFF) is disordered. The segment covering 552-565 (STMTSSSSKDFSSS) has biased composition (low complexity).

In terms of assembly, interacts with SYCE1. Interacts with proteasome subunit PSMA8; to participate in meiosis progression during spermatogenesis. In terms of tissue distribution, most abundantly expressed in testis. Also expressed in retina and skeletal muscle.

Its subcellular location is the chromosome. In terms of biological role, meiotic protein that localizes to the central element of the synaptonemal complex and is required for chromosome synapsis during meiotic recombination. Required for the appropriate processing of intermediate recombination nodules before crossover formation. The chain is Protein SIX6OS1 (Six6os1) from Mus musculus (Mouse).